The sequence spans 336 residues: Calcium uniporter regulatory subunit MCUb, mitochondrial (336 aa).

A mitochondrion-targeting transit peptide spans 1-35; sequence MLQRGLWPWRTRLLPTPGTWRPARPWPLPPPPQVL. A coiled-coil region spans residues 179–210; the sequence is ESQKKREHHLLEKIDHLKEQLQPLEQVKAGIE. 2 consecutive transmembrane segments (helical) span residues 220–240 and 250–270; these read LLWAGLALLSIQGGALAWLTW and PVTYFITFANSMVFFAYFIVT. Residues 297-323 are a coiled coil; sequence FDVQQYNKLKEDLAKAKESLKQARHSL.

It belongs to the MCU (TC 1.A.77) family. As to quaternary structure, homooligomer. Associates with the uniplex complex, composed of MCU, MICU1, MICU2 and EMRE/SMDT1, inhibiting its activity.

Its subcellular location is the mitochondrion inner membrane. Functionally, negative regulator of the mitochondrial calcium uniporter (MCU), a channel that mediates calcium uptake into the mitochondrial matrix. MCUB is required to limit mitochondrial calcium overload during stress. Acts as a dominant-negative regulator that displaces MCU from the functional uniplex complex and thereby decreases the association of calcium sensors MICU1 and MICU2, preventing channel gating. Mitochondrial calcium homeostasis plays key roles in mitochondrial metabolism. Acts as an important regulator of mitochondrial metabolism in response to stress in muscle cells: induced in response to fasting, leading to restrict mitochondrial calcium uptake, resulting in reprogramming of mitochondria toward fatty acid oxidation preference. Acts as a regulator of macrophage polarization during skeletal muscle regeneration: inhibition of mitochondrial calcium uptake drives differentiation of macrophages with anti-inflammatory profile, promoting the differentiation and fusion of satellite cells. This is Calcium uniporter regulatory subunit MCUb, mitochondrial from Homo sapiens (Human).